Reading from the N-terminus, the 156-residue chain is Ribosomal RNA large subunit methyltransferase H (156 aa).

Residues L73, G104, and 123–128 each bind S-adenosyl-L-methionine; that span reads VSSLTL.

Belongs to the RNA methyltransferase RlmH family. In terms of assembly, homodimer.

The protein localises to the cytoplasm. The catalysed reaction is pseudouridine(1915) in 23S rRNA + S-adenosyl-L-methionine = N(3)-methylpseudouridine(1915) in 23S rRNA + S-adenosyl-L-homocysteine + H(+). Functionally, specifically methylates the pseudouridine at position 1915 (m3Psi1915) in 23S rRNA. This Paraburkholderia phytofirmans (strain DSM 17436 / LMG 22146 / PsJN) (Burkholderia phytofirmans) protein is Ribosomal RNA large subunit methyltransferase H.